Reading from the N-terminus, the 61-residue chain is Small ribosomal subunit protein bS21 (61 aa).

Residues 36–61 (EHYESPSVKRKKKAEAARKRKYKYGR) form a disordered region. Over residues 43–61 (VKRKKKAEAARKRKYKYGR) the composition is skewed to basic residues.

The protein belongs to the bacterial ribosomal protein bS21 family.

This chain is Small ribosomal subunit protein bS21 (rpsU), found in Caldanaerobacter subterraneus subsp. tengcongensis (strain DSM 15242 / JCM 11007 / NBRC 100824 / MB4) (Thermoanaerobacter tengcongensis).